We begin with the raw amino-acid sequence, 570 residues long: CDKN2A-interacting protein (570 aa).

Residue A2 is modified to N-acetylalanine. In terms of domain architecture, XRN2-binding (XTBD) spans 19-126; sequence VETLRCEGET…KVKKRGISSS (108 aa). A disordered region spans residues 122 to 345; it reads GISSSNEGVE…TSLLMPKSSS (224 aa). Residue S124 is modified to Phosphoserine. The span at 147–162 shows a compositional bias: basic and acidic residues; sequence VERDHGKKSAKTDRSA. Low complexity predominate over residues 167 to 183; the sequence is SSGSKGSSTKSESSGTS. Residue K176 forms a Glycyl lysine isopeptide (Lys-Gly) (interchain with G-Cter in SUMO1) linkage. Residues 184–198 are compositionally biased toward polar residues; it reads ARSNSGVSHQNSSTS. The segment covering 203 to 221 has biased composition (low complexity); it reads SVCSQSSSNSSQVTSAGSG. Over residues 224–233 the composition is skewed to basic and acidic residues; it reads SEPEAPDKHG. S234 carries the phosphoserine modification. Composition is skewed to low complexity over residues 234–248 and 271–301; these read SASF…SLNS and SSVS…PLLS. A compositionally biased stretch (polar residues) spans 302–317; sequence CKSSSETASSGLTTKA. The segment covering 318–345 has biased composition (low complexity); that stretch reads SSEANISSSVSKNSSSSGTSLLMPKSSS. A Phosphoserine modification is found at S378. The tract at residues 383–407 is disordered; sequence SQLASKSSSQSSTSQLPSKSTSQSS. The 76-residue stretch at 452-527 folds into the DRBM domain; sequence NHGELLNAAI…SREALKLFLK (76 aa).

The protein belongs to the CARF family. In terms of assembly, interacts with CDKN2A/p14ARF, p53/TP53 and MDM2. Interacts with CHEK2 and MAPK3. Interacts with XRN2. May be ubiquitinated.

Its subcellular location is the nucleus. The protein localises to the nucleoplasm. In terms of biological role, regulates DNA damage response and cell proliferation in a dose-dependent manner through a number of signaling pathways involved in cell proliferation, apoptosis and senescence. This is CDKN2A-interacting protein (Cdkn2aip) from Rattus norvegicus (Rat).